The following is a 37-amino-acid chain: Large ribosomal subunit protein bL36c (37 aa).

The protein belongs to the bacterial ribosomal protein bL36 family.

It is found in the plastid. It localises to the chloroplast. The sequence is that of Large ribosomal subunit protein bL36c from Phaeodactylum tricornutum (strain CCAP 1055/1).